The primary structure comprises 20 residues: GYKVTYFAIRGLAEPIXLLL.

One can recognise a GST N-terminal domain in the interval 1-20 (GYKVTYFAIRGLAEPIXLLL). Tyrosine 6 is a glutathione binding site.

This sequence belongs to the GST superfamily. Sigma family.

It carries out the reaction RX + glutathione = an S-substituted glutathione + a halide anion + H(+). Conjugation of reduced glutathione to a wide number of exogenous and endogenous hydrophobic electrophiles. In Ascaris suum (Pig roundworm), this protein is Glutathione S-transferase 2 (GST2).